Reading from the N-terminus, the 356-residue chain is Phosphoserine aminotransferase (356 aa).

Arg-41 provides a ligand contact to L-glutamate. Pyridoxal 5'-phosphate-binding positions include 76–77 (AS), Trp-102, Thr-150, Asp-169, and Gln-192. Lys-193 is subject to N6-(pyridoxal phosphate)lysine. 234 to 235 (NT) contacts pyridoxal 5'-phosphate.

This sequence belongs to the class-V pyridoxal-phosphate-dependent aminotransferase family. SerC subfamily. In terms of assembly, homodimer. Pyridoxal 5'-phosphate serves as cofactor.

It localises to the cytoplasm. It catalyses the reaction O-phospho-L-serine + 2-oxoglutarate = 3-phosphooxypyruvate + L-glutamate. It carries out the reaction 4-(phosphooxy)-L-threonine + 2-oxoglutarate = (R)-3-hydroxy-2-oxo-4-phosphooxybutanoate + L-glutamate. It participates in amino-acid biosynthesis; L-serine biosynthesis; L-serine from 3-phospho-D-glycerate: step 2/3. Its pathway is cofactor biosynthesis; pyridoxine 5'-phosphate biosynthesis; pyridoxine 5'-phosphate from D-erythrose 4-phosphate: step 3/5. Catalyzes the reversible conversion of 3-phosphohydroxypyruvate to phosphoserine and of 3-hydroxy-2-oxo-4-phosphonooxybutanoate to phosphohydroxythreonine. In Flavobacterium johnsoniae (strain ATCC 17061 / DSM 2064 / JCM 8514 / BCRC 14874 / CCUG 350202 / NBRC 14942 / NCIMB 11054 / UW101) (Cytophaga johnsonae), this protein is Phosphoserine aminotransferase.